The chain runs to 420 residues: Gamma-glutamyl phosphate reductase (420 aa).

It belongs to the gamma-glutamyl phosphate reductase family.

It localises to the cytoplasm. The catalysed reaction is L-glutamate 5-semialdehyde + phosphate + NADP(+) = L-glutamyl 5-phosphate + NADPH + H(+). It functions in the pathway amino-acid biosynthesis; L-proline biosynthesis; L-glutamate 5-semialdehyde from L-glutamate: step 2/2. Its function is as follows. Catalyzes the NADPH-dependent reduction of L-glutamate 5-phosphate into L-glutamate 5-semialdehyde and phosphate. The product spontaneously undergoes cyclization to form 1-pyrroline-5-carboxylate. The sequence is that of Gamma-glutamyl phosphate reductase from Streptococcus pneumoniae (strain CGSP14).